The sequence spans 366 residues: Lysophosphatidic acid receptor 1-A (366 aa).

At 1–52 (MASLSEFVSEPISMMSQTSAASESQCYYNETIAFFYNRSGKYLATEWNAVSK) the chain is on the extracellular side. 2 disulfides stabilise this stretch: Cys26–Cys192 and Cys190–Cys197. N-linked (GlcNAc...) asparagine glycosylation is found at Asn29 and Asn37. Residue Lys41 participates in a 1-acyl-sn-glycero-3-phosphate binding. A helical membrane pass occupies residues 53–77 (LVMGLGITVCIFIMLANLLVMVAIY). Over 78-85 (VNRRFHFP) the chain is Cytoplasmic. Residues 86-109 (IYYLMANLAAADFFAGLAYFYLMF) form a helical membrane-spanning segment. Topologically, residues 110–123 (NTGPNTRRLTVSTW) are extracellular. Residues 124–146 (LLRQGLIDTSLTASVANLLAIAI) traverse the membrane as a helical segment. Residue 126–131 (RQGLID) participates in a 1-acyl-sn-glycero-3-phosphate binding. Over 147–165 (ERHITVFRMQLHTRMSNRR) the chain is Cytoplasmic. A helical transmembrane segment spans residues 166 to 186 (VVVVIVVIWTVAIVMGAIPSV). Residues 187-206 (GWNCICDLEQCSNMAPLYSD) are Extracellular-facing. The chain crosses the membrane as a helical span at residues 207 to 227 (SYLIFWTIFNLVTFVVMVVLY). Trp212 serves as a coordination point for a 1-acyl-sn-glycero-3-phosphate. The Cytoplasmic portion of the chain corresponds to 228–257 (AHIFVYVRQKTMRMSRHSSGPRRNRDTMMS). A helical transmembrane segment spans residues 258 to 282 (LLKTVVIVLGAFIVCWTPGLVLLLL). Over 283-296 (DICCPQCNILAYEK) the chain is Extracellular. An intrachain disulfide couples Cys286 to Cys289. The chain crosses the membrane as a helical span at residues 297 to 317 (FFLLLAEFNSAMNPIIYSYRD). Residues 318–366 (KEMSATFKQILCCQRTENVNGPTEGSDRSASSLNHTILAGVHSNDHSVV) are Cytoplasmic-facing.

Belongs to the G-protein coupled receptor 1 family. Expressed at high levels in oocytes and at lower levels in brain and spinal cord. Below detection level in lung, heart, kidney, liver, muscle, stomach, and intestine.

It localises to the cell surface. It is found in the cell membrane. The protein localises to the endosome. In terms of biological role, receptor for lysophosphatidic acid (LPA). Plays a role in the reorganization of the actin cytoskeleton, cell migration, differentiation and proliferation, and thereby contributes to the responses to tissue damage and infectious agents. Activates downstream signaling cascades via the G(i)/G(o), G(12)/G(13), and G(q) families of heteromeric G proteins. Signaling inhibits adenylyl cyclase activity and decreases cellular cAMP levels. Signaling triggers an increase of cytoplasmic Ca(2+) levels. Signaling leads to the activation of phospholipase C (PLC) and the formation of inositol 1,4,5-trisphosphate. Signaling mediates activation of down-stream MAP kinases. Contributes to the regulation of cell shape. Promotes Rho-dependent reorganization of the actin cytoskeleton in neuronal cells and neurite retraction. Promotes the activation of Rho and the formation of actin stress fibers. Promotes formation of lamellipodia at the leading edge of migrating cells via activation of Rac. Through its function as lysophosphatidic acid receptor, plays a role in chemotaxis and cell migration, including responses to injury and wounding. Promotes cell proliferation in response to lysophosphatidic acid. This Xenopus laevis (African clawed frog) protein is Lysophosphatidic acid receptor 1-A (lpar1-a).